Reading from the N-terminus, the 336-residue chain is Holliday junction branch migration complex subunit RuvB (336 aa).

The interval Met1–Tyr182 is large ATPase domain (RuvB-L). ATP is bound by residues Leu21, Arg22, Gly63, Lys66, Thr67, Ser68, Glu129–Phe131, Arg172, Tyr182, and Arg219. Thr67 is a binding site for Mg(2+). The tract at residues Ser183–Gly253 is small ATPAse domain (RuvB-S). Residues Glu256–Phe336 are head domain (RuvB-H). 2 residues coordinate DNA: Arg310 and Arg315.

This sequence belongs to the RuvB family. In terms of assembly, homohexamer. Forms an RuvA(8)-RuvB(12)-Holliday junction (HJ) complex. HJ DNA is sandwiched between 2 RuvA tetramers; dsDNA enters through RuvA and exits via RuvB. An RuvB hexamer assembles on each DNA strand where it exits the tetramer. Each RuvB hexamer is contacted by two RuvA subunits (via domain III) on 2 adjacent RuvB subunits; this complex drives branch migration. In the full resolvosome a probable DNA-RuvA(4)-RuvB(12)-RuvC(2) complex forms which resolves the HJ.

It localises to the cytoplasm. The catalysed reaction is ATP + H2O = ADP + phosphate + H(+). Its function is as follows. The RuvA-RuvB-RuvC complex processes Holliday junction (HJ) DNA during genetic recombination and DNA repair, while the RuvA-RuvB complex plays an important role in the rescue of blocked DNA replication forks via replication fork reversal (RFR). RuvA specifically binds to HJ cruciform DNA, conferring on it an open structure. The RuvB hexamer acts as an ATP-dependent pump, pulling dsDNA into and through the RuvAB complex. RuvB forms 2 homohexamers on either side of HJ DNA bound by 1 or 2 RuvA tetramers; 4 subunits per hexamer contact DNA at a time. Coordinated motions by a converter formed by DNA-disengaged RuvB subunits stimulates ATP hydrolysis and nucleotide exchange. Immobilization of the converter enables RuvB to convert the ATP-contained energy into a lever motion, pulling 2 nucleotides of DNA out of the RuvA tetramer per ATP hydrolyzed, thus driving DNA branch migration. The RuvB motors rotate together with the DNA substrate, which together with the progressing nucleotide cycle form the mechanistic basis for DNA recombination by continuous HJ branch migration. Branch migration allows RuvC to scan DNA until it finds its consensus sequence, where it cleaves and resolves cruciform DNA. This Helicobacter pylori (strain Shi470) protein is Holliday junction branch migration complex subunit RuvB.